Consider the following 328-residue polypeptide: Cytochrome f (328 aa).

The signal sequence occupies residues 1–44; sequence MRTPDFSAIWQASKQLTARIILLAFATFALYVFHDLAFPQGAAA. Tyr-45, Cys-66, Cys-69, and His-70 together coordinate heme. A helical membrane pass occupies residues 294–314; that stretch reads IKGLMVFLAGIMLAQILLVIK.

The protein belongs to the cytochrome f family. In terms of assembly, the 4 large subunits of the cytochrome b6-f complex are cytochrome b6, subunit IV (17 kDa polypeptide, PetD), cytochrome f and the Rieske protein, while the 4 small subunits are PetG, PetL, PetM and PetN. The complex functions as a dimer. Requires heme as cofactor.

Its subcellular location is the cellular thylakoid membrane. Component of the cytochrome b6-f complex, which mediates electron transfer between photosystem II (PSII) and photosystem I (PSI), cyclic electron flow around PSI, and state transitions. This chain is Cytochrome f, found in Rippkaea orientalis (strain PCC 8801 / RF-1) (Cyanothece sp. (strain PCC 8801)).